The chain runs to 179 residues: Early E3 20.1 kDa glycoprotein (179 aa).

5 N-linked (GlcNAc...) asparagine; by host glycosylation sites follow: asparagine 29, asparagine 57, asparagine 70, asparagine 75, and asparagine 123.

The protein belongs to the adenoviridae E3_20 family.

Its function is as follows. E3 proteins seem to be dispensable for virus growth in tissue culture cells. They are potentially important for virus growth under special conditions; E3 region may help adenoviruses to evade the immune surveillance of the host. This chain is Early E3 20.1 kDa glycoprotein, found in Homo sapiens (Human).